Here is a 286-residue protein sequence, read N- to C-terminus: Versiconal hemiacetal acetate esterase stcI (286 aa).

The Involved in the stabilization of the negatively charged intermediate by the formation of the oxyanion hole motif lies at 54–56 (HAG). Active-site residues include Ser123, Asp226, and His256.

The protein belongs to the 'GDXG' lipolytic enzyme family.

It carries out the reaction (2S,3S)-versiconal hemiacetal acetate + H2O = (2S-3S)-versiconal hemiacetal + acetate + H(+). It catalyses the reaction (3S)-versiconol acetate + H2O = (S)-versiconol + acetate + H(+). It functions in the pathway mycotoxin biosynthesis; sterigmatocystin biosynthesis. Functionally, esterase; part of the gene cluster that mediates the biosynthesis of sterigmatocystin (ST), a polyketide-derived furanocoumarin which is part of the most toxic and carcinogenic compounds among the known mycotoxins. The first step in the biosynthesis of sterigmatocystin is the production of hexanoate by the fatty acid synthase (FAS) units stcJ and stcK. The polyketide backbone is assembled by the non-reducing polyketide synthase stcA by condensation of the starter hexanoyl-CoA and 7 malonyl-CoA extender units followed by cyclization and release of norsolorinic acid. Norsolorinic acid is the first stable intermediate in the biosynthesis of sterigmatocystin and is converted into averantin (AVN) by the ketoreductase stcE which reduces the hexanoate ketone to an alcohol. Averantin is then oxidized into 5'-hydroxyaverantin (HAVN) by the cytochrome P450 monooxygenase stcF. 5'-hydroxyaverantin is further converted to 5'-oxyaverantin (OAVN) by the 5'-hydroxyaverantin dehydrogenase stcG. The next step is the conversion of OAVN into averufin (AVF) which is catalyzed by a yet to be identified enzyme. The cytochrome P450 monooxygenase stcB and the flavin-binding monooxygenase stcW are both required for the conversion of averufin to 1-hydroxyversicolorone. The esterase stcI probably catalyzes the formation of versiconal hemiacetal acetate from 1-hydroxyversicolorone. The oxydoreductase stcN then probably catalyzes the biosynthetic step from versiconal to versicolorin B (VERB). The next step is performed by the versicolorin B desaturase stcL to produce versicolorin A (VERA). The ketoreductase stcU and the cytochrome P450 monooxygenase stcS are involved in the conversion of versicolorin A to demethylsterigmatocystin. The Baeyer-Villiger oxidas stcQ and the reductase stcR might be involved in the biosynthetic step from versicolorin A to demethylsterigmatocystin. The final step in the biosynthesis of sterigmatocystin is the methylation of demethylsterigmatocystin catalyzed by the methyltransferase stcP. This chain is Versiconal hemiacetal acetate esterase stcI, found in Emericella nidulans (strain FGSC A4 / ATCC 38163 / CBS 112.46 / NRRL 194 / M139) (Aspergillus nidulans).